Reading from the N-terminus, the 318-residue chain is 2-desacetyl-2-hydroxyethyl bacteriochlorophyllide A dehydrogenase (318 aa).

Its pathway is porphyrin-containing compound metabolism; bacteriochlorophyll biosynthesis (light-independent). Functionally, this protein catalyzes the penultimate step in bacteriochlorophyll a biosynthesis. The protein is 2-desacetyl-2-hydroxyethyl bacteriochlorophyllide A dehydrogenase (bchC) of Cereibacter sphaeroides (strain ATCC 17023 / DSM 158 / JCM 6121 / CCUG 31486 / LMG 2827 / NBRC 12203 / NCIMB 8253 / ATH 2.4.1.) (Rhodobacter sphaeroides).